An 89-amino-acid polypeptide reads, in one-letter code: Pigment-dispersing hormone peptides (89 aa).

An N-terminal signal peptide occupies residues 1–22 (MTAMAVSGKLLTALVLSTYILG). Alanine 86 carries the alanine amide modification.

It belongs to the arthropod PDH family.

The protein resides in the secreted. Its function is as follows. Capable of inducing pigment dispersion in the chromatophores of the fiddler crab Uca pugilator. In Romalea microptera (Eastern lubber grasshopper), this protein is Pigment-dispersing hormone peptides.